A 154-amino-acid polypeptide reads, in one-letter code: Ascorbate-specific PTS system EIIA component (154 aa).

The PTS EIIA type-2 domain occupies 6–150; it reads SLAENNSIRL…QEVLDLIDRT (145 aa). Catalysis depends on histidine 68, which acts as the Tele-phosphohistidine intermediate. Histidine 68 bears the Phosphohistidine mark.

The protein resides in the cytoplasm. In terms of biological role, the phosphoenolpyruvate-dependent sugar phosphotransferase system (sugar PTS), a major carbohydrate active transport system, catalyzes the phosphorylation of incoming sugar substrates concomitantly with their translocation across the cell membrane. The enzyme II UlaABC PTS system is involved in ascorbate transport. This chain is Ascorbate-specific PTS system EIIA component (ulaC), found in Salmonella paratyphi A (strain ATCC 9150 / SARB42).